The following is a 478-amino-acid chain: Transcript termination protein A18 (478 aa).

One can recognise a Helicase ATP-binding domain in the interval 98-254 (KLSTHRPMYM…NDVVNVLKVS (157 aa)). ATP is bound at residue 111–118 (LSCGFGKT). The DESH box signature appears at 204 to 207 (DESH). The 153-residue stretch at 302–454 (PRNNLIVDTV…IVSVSTDKLG (153 aa)) folds into the Helicase C-terminal domain. The disordered stretch occupies residues 456-478 (QQEGKEGTKEEPALTKAFSSQIR). Residues 458-468 (EGKEGTKEEPA) are compositionally biased toward basic and acidic residues.

Belongs to the helicase family. Poxviruses subfamily. Interacts with G2. Might be part of a transcription complex composed at least of G2, A18, and H5.

It localises to the virion. Its function is as follows. DNA helicase which seems to act as a postreplicative transcription termination factor. Involved in ATP-dependent release of nascent RNA. Forms a stable complex with single-stranded DNA, and to a lesser extent RNA. The polypeptide is Transcript termination protein A18 (Oryctolagus cuniculus (Rabbit)).